Here is a 62-residue protein sequence, read N- to C-terminus: Sperm protamine P1 (62 aa).

The interval 1–62 is disordered; sequence MARYRHSRSR…RYSRRRRRRY (62 aa).

This sequence belongs to the protamine P1 family. In terms of tissue distribution, testis.

Its subcellular location is the nucleus. The protein resides in the chromosome. Its function is as follows. Protamines substitute for histones in the chromatin of sperm during the haploid phase of spermatogenesis. They compact sperm DNA into a highly condensed, stable and inactive complex. This chain is Sperm protamine P1 (PRM1), found in Dendrolagus dorianus (Doria's tree-kangaroo).